Here is a 121-residue protein sequence, read N- to C-terminus: uncharacterized protein (121 aa).

This is an uncharacterized protein from Caenorhabditis elegans.